Consider the following 271-residue polypeptide: 3-methyl-2-oxobutanoate hydroxymethyltransferase (271 aa).

The Mg(2+) site is built by D53 and D92. Residues 53–54 (DS), D92, and K120 each bind 3-methyl-2-oxobutanoate. Residue E122 participates in Mg(2+) binding. Residue E189 is the Proton acceptor of the active site.

It belongs to the PanB family. As to quaternary structure, homodecamer; pentamer of dimers. Mg(2+) is required as a cofactor.

The protein localises to the cytoplasm. The enzyme catalyses 3-methyl-2-oxobutanoate + (6R)-5,10-methylene-5,6,7,8-tetrahydrofolate + H2O = 2-dehydropantoate + (6S)-5,6,7,8-tetrahydrofolate. Its pathway is cofactor biosynthesis; (R)-pantothenate biosynthesis; (R)-pantoate from 3-methyl-2-oxobutanoate: step 1/2. Its function is as follows. Catalyzes the reversible reaction in which hydroxymethyl group from 5,10-methylenetetrahydrofolate is transferred onto alpha-ketoisovalerate to form ketopantoate. This chain is 3-methyl-2-oxobutanoate hydroxymethyltransferase, found in Burkholderia vietnamiensis (strain G4 / LMG 22486) (Burkholderia cepacia (strain R1808)).